Reading from the N-terminus, the 266-residue chain is Undecaprenyl-diphosphatase (266 aa).

8 helical membrane passes run 4 to 24, 39 to 59, 86 to 106, 112 to 132, 145 to 165, 182 to 202, 210 to 230, and 246 to 266; these read ILSA…PISS, LSII…IIYY, LKLI…GTFI, MFTL…ILML, ILLA…PGIS, KSAF…AILL, IFMV…FVVG, and LYYF…FVRI.

This sequence belongs to the UppP family.

Its subcellular location is the cell inner membrane. It carries out the reaction di-trans,octa-cis-undecaprenyl diphosphate + H2O = di-trans,octa-cis-undecaprenyl phosphate + phosphate + H(+). Functionally, catalyzes the dephosphorylation of undecaprenyl diphosphate (UPP). Confers resistance to bacitracin. The protein is Undecaprenyl-diphosphatase of Borreliella burgdorferi (strain ATCC 35210 / DSM 4680 / CIP 102532 / B31) (Borrelia burgdorferi).